The sequence spans 224 residues: ATP-dependent dethiobiotin synthetase BioD (224 aa).

13-18 (NVGKTI) is a binding site for ATP. Thr-17 is a binding site for Mg(2+). Lys-38 is an active-site residue. Ser-42 is a substrate binding site. Residues Asp-55, 116 to 119 (EGAG), 176 to 177 (NN), and Asn-211 contribute to the ATP site. Mg(2+)-binding residues include Asp-55 and Glu-116.

It belongs to the dethiobiotin synthetase family. Homodimer. The cofactor is Mg(2+).

The protein localises to the cytoplasm. The catalysed reaction is (7R,8S)-7,8-diammoniononanoate + CO2 + ATP = (4R,5S)-dethiobiotin + ADP + phosphate + 3 H(+). It functions in the pathway cofactor biosynthesis; biotin biosynthesis; biotin from 7,8-diaminononanoate: step 1/2. In terms of biological role, catalyzes a mechanistically unusual reaction, the ATP-dependent insertion of CO2 between the N7 and N8 nitrogen atoms of 7,8-diaminopelargonic acid (DAPA, also called 7,8-diammoniononanoate) to form a ureido ring. This chain is ATP-dependent dethiobiotin synthetase BioD, found in Buchnera aphidicola subsp. Acyrthosiphon pisum (strain APS) (Acyrthosiphon pisum symbiotic bacterium).